The primary structure comprises 338 residues: Ribosomal RNA small subunit methyltransferase H (338 aa).

Residues 53–55, Asp-72, Tyr-99, Asp-123, and Gln-130 each bind S-adenosyl-L-methionine; that span reads GGH. The segment at 277–298 is disordered; that stretch reads ITPRSKSKSPEGLPVELPGMGP.

It belongs to the methyltransferase superfamily. RsmH family.

Its subcellular location is the cytoplasm. The enzyme catalyses cytidine(1402) in 16S rRNA + S-adenosyl-L-methionine = N(4)-methylcytidine(1402) in 16S rRNA + S-adenosyl-L-homocysteine + H(+). Its function is as follows. Specifically methylates the N4 position of cytidine in position 1402 (C1402) of 16S rRNA. This is Ribosomal RNA small subunit methyltransferase H from Rhodococcus opacus (strain B4).